A 140-amino-acid polypeptide reads, in one-letter code: Ribosome maturation factor RimP (140 aa).

Belongs to the RimP family.

It localises to the cytoplasm. Its function is as follows. Required for maturation of 30S ribosomal subunits. This Campylobacter fetus subsp. fetus (strain 82-40) protein is Ribosome maturation factor RimP.